Consider the following 1012-residue polypeptide: DNA polymerase catalytic subunit (1012 aa).

Residues 1–31 (MDFFNPFIDPTRGGPRNTVRQPTPSQSPTVP) form a disordered region. A compositionally biased stretch (low complexity) spans 21–31 (QPTPSQSPTVP).

It belongs to the DNA polymerase type-B family. As to quaternary structure, forms a complex with the ssDNA-binding protein, the DNA polymerase processivity factor, and the alkaline exonuclease. Interacts with the putative helicase-primase complex subunit; this interaction may coordinate leading and lagging strand DNA synthesis at the replication fork.

Its subcellular location is the host nucleus. The enzyme catalyses DNA(n) + a 2'-deoxyribonucleoside 5'-triphosphate = DNA(n+1) + diphosphate. The catalysed reaction is Endonucleolytic cleavage to 5'-phosphomonoester.. Functionally, replicates viral genomic DNA. The replication complex is composed of six viral proteins: the DNA polymerase, processivity factor, primase, primase-associated factor, helicase, and ssDNA-binding protein. Additionally, the polymerase contains an intrinsic ribonuclease H (RNase H) activity that specifically degrades RNA/DNA heteroduplexes or duplex DNA substrates in the 5' to 3' direction. Therefore, it can catalyze the excision of the RNA primers that initiate the synthesis of Okazaki fragments at a replication fork during viral DNA replication. This chain is DNA polymerase catalytic subunit (ORF9), found in Human herpesvirus 8 type P (isolate GK18) (HHV-8).